A 461-amino-acid chain; its full sequence is NADP-specific glutamate dehydrogenase (461 aa).

Lysine 115 is a catalytic residue.

Belongs to the Glu/Leu/Phe/Val dehydrogenases family. Homohexamer.

The catalysed reaction is L-glutamate + NADP(+) + H2O = 2-oxoglutarate + NH4(+) + NADPH + H(+). The chain is NADP-specific glutamate dehydrogenase (GDH) from Penicillium chrysogenum (Penicillium notatum).